A 304-amino-acid polypeptide reads, in one-letter code: Recombination-associated protein RdgC (304 aa).

The protein belongs to the RdgC family.

The protein resides in the cytoplasm. It is found in the nucleoid. Functionally, may be involved in recombination. This chain is Recombination-associated protein RdgC, found in Shewanella baltica (strain OS195).